The chain runs to 63 residues: Beta-toxin NaTx36 (63 aa).

The LCN-type CS-alpha/beta domain occupies K1–R62. Disulfide bonds link C11–C61, C15–C36, C22–C43, and C26–C45.

The protein belongs to the long (4 C-C) scorpion toxin superfamily. Sodium channel inhibitor family. Beta subfamily. As to expression, expressed by the venom gland.

It is found in the secreted. Its function is as follows. Beta toxins bind sodium channels (Nav) and shift the voltage of activation towards more negative potentials thereby affecting sodium channel activation and promoting spontaneous and repetitive firing. Only when tested on grasshopper mouse channels, this toxin inhibits Nav1.8/SCN10A sodium currents in a concentration and voltage-dependent manner (IC(50)=680 nM). This toxin hyperpolarizes the voltage dependence of Nav1.8/SCN10A activation, as well as steady-state fast inactivation and slow inactivation. In contrast to most beta scorpion toxins, this toxin inhibits grasshopper mouse Nav1.8/SCN10A currents through modulation of the domain I S4 voltage sensor, and the domain II second S5-S6 extracellular pore loop. In Centruroides sculpturatus (Arizona bark scorpion), this protein is Beta-toxin NaTx36.